Consider the following 106-residue polypeptide: Large ribosomal subunit protein uL24 (106 aa).

The protein belongs to the universal ribosomal protein uL24 family. As to quaternary structure, part of the 50S ribosomal subunit.

In terms of biological role, one of two assembly initiator proteins, it binds directly to the 5'-end of the 23S rRNA, where it nucleates assembly of the 50S subunit. Functionally, one of the proteins that surrounds the polypeptide exit tunnel on the outside of the subunit. In Acidithiobacillus ferrooxidans (strain ATCC 53993 / BNL-5-31) (Leptospirillum ferrooxidans (ATCC 53993)), this protein is Large ribosomal subunit protein uL24.